The sequence spans 388 residues: MSTLQAVKYIRGKLEVLDQLRLPHEFHYDEVSNRTEAFDSIYTMRVRGAPAIAIVAALGLAVELHNGSCTASSAEETIGQIEEALDYLKESRPTAVDLTNAINQLKARIREVGSTATKEAIISAFIEEAEKIFEKDLKTNLSIGDFGAEWLRAQVGASPEQQISVLTHCNTGSLATSGHGTALGIIRTLQAKKLLHHAFCTETRPYNQGSRLTAFELVFEGIPSTLITDSMAASLFRTRKQEKNIAAVIVGADRVVRNGDTANKIGTYQLAVLAKHHGVKFIVAAPTTSIDLETETGDGIKIEERKKEELTQVTGAVIKPDGTVDESSKVRVATADQRINVWNPAFDVTPAEFIDAVVTEKGAIEKGPDGKFDFSQILPERWAKITGA.

The active-site Proton donor is the D253.

Belongs to the eIF-2B alpha/beta/delta subunits family. MtnA subfamily.

Its subcellular location is the cytoplasm. The protein resides in the nucleus. The enzyme catalyses 5-(methylsulfanyl)-alpha-D-ribose 1-phosphate = 5-(methylsulfanyl)-D-ribulose 1-phosphate. It participates in amino-acid biosynthesis; L-methionine biosynthesis via salvage pathway; L-methionine from S-methyl-5-thio-alpha-D-ribose 1-phosphate: step 1/6. Functionally, catalyzes the interconversion of methylthioribose-1-phosphate (MTR-1-P) into methylthioribulose-1-phosphate (MTRu-1-P). In Fusarium vanettenii (strain ATCC MYA-4622 / CBS 123669 / FGSC 9596 / NRRL 45880 / 77-13-4) (Fusarium solani subsp. pisi), this protein is Methylthioribose-1-phosphate isomerase.